Reading from the N-terminus, the 780-residue chain is Pentatricopeptide repeat-containing protein At1g79540 (780 aa).

PPR repeat units follow at residues 91–125 (SRESFGLVIDMLSEDNGCDLYWQTLEELKSGGVSV), 126–160 (DSYCFCVLISAYAKMGMAEKAVESFGRMKEFDCRP), 161–196 (DVFTYNVILRVMMREEVFFMLAFAVYNEMLKCNCSP), 197–231 (NLYTFGILMDGLYKKGRTSDAQKMFDDMTGRGISP), 232–266 (NRVTYTILISGLCQRGSADDARKLFYEMQTSGNYP), 267–301 (DSVAHNALLDGFCKLGRMVEAFELLRLFEKDGFVL), 302–336 (GLRGYSSLIDGLFRARRYTQAFELYANMLKKNIKP), 337–371 (DIILYTILIQGLSKAGKIEDALKLLSSMPSKGISP), 372–406 (DTYCYNAVIKALCGRGLLEEGRSLQLEMSETESFP), 407–441 (DACTHTILICSMCRNGLVREAEEIFTEIEKSGCSP), 442–476 (SVATFNALIDGLCKSGELKEARLLLHKMEVGRPAS), 481–515 (LSHSGNRSFDTMVESGSILKAYRDLAHFADTGSSP), 516–550 (DIVSYNVLINGFCRAGDIDGALKLLNVLQLKGLSP), 551–585 (DSVTYNTLINGLHRVGREEEAFKLFYAKDDFRHSP), 653–687 (TLGPYTIWLIGLCQSGRFHEALMVFSVLREKKILV), 688–722 (TPPSCVKLIHGLCKREQLDAAIEVFLYTLDNNFKL), and 723–758 (MPRVCNYLLSSLLESTEKMEIVSQLTNRMERAGYNV).

The protein belongs to the PPR family. P subfamily.

This chain is Pentatricopeptide repeat-containing protein At1g79540, found in Arabidopsis thaliana (Mouse-ear cress).